The following is a 445-amino-acid chain: Histidinol dehydrogenase (445 aa).

Tyrosine 138, glutamine 199, and asparagine 222 together coordinate NAD(+). Residues serine 245, glutamine 267, and histidine 270 each contribute to the substrate site. Residues glutamine 267 and histidine 270 each coordinate Zn(2+). Catalysis depends on proton acceptor residues glutamate 335 and histidine 336. Positions 336, 369, 423, and 428 each coordinate substrate. A Zn(2+)-binding site is contributed by aspartate 369. Position 428 (histidine 428) interacts with Zn(2+).

This sequence belongs to the histidinol dehydrogenase family. Requires Zn(2+) as cofactor.

It carries out the reaction L-histidinol + 2 NAD(+) + H2O = L-histidine + 2 NADH + 3 H(+). The protein operates within amino-acid biosynthesis; L-histidine biosynthesis; L-histidine from 5-phospho-alpha-D-ribose 1-diphosphate: step 9/9. Its function is as follows. Catalyzes the sequential NAD-dependent oxidations of L-histidinol to L-histidinaldehyde and then to L-histidine. The polypeptide is Histidinol dehydrogenase (Burkholderia mallei (strain ATCC 23344)).